The chain runs to 269 residues: Zinc finger protein SNAI2 (269 aa).

Residues M1 to S20 form an SNAG domain region. The disordered stretch occupies residues S81–K117. 4 consecutive C2H2-type zinc fingers follow at residues F129 to H151, F160 to H182, C186 to H208, and F214 to H236. Residues Y242–C265 form a C2H2-type 5; atypical zinc finger.

Belongs to the snail C2H2-type zinc-finger protein family. In terms of assembly, interacts (via SNAG domain) with LIMD1 (via LIM domains), WTIP (via LIM domains) and AJUBA (via LIM domains). Interacts (via zinc fingers) with KPNA2, KPNB1, and TNPO1. May interact (via zinc fingers) with IPO7. Phosphorylated by GSK3B. Once phosphorylated, it becomes a target for ubiquitination. In terms of processing, ubiquitinated by the SCF(FBXO11) complex; ubiquitination requires previous GSK3B-mediated SNAI2 phosphorylation.

It localises to the nucleus. It is found in the cytoplasm. Transcriptional repressor that modulates both activator-dependent and basal transcription. Involved in the generation and migration of neural crest cells. Plays a role in mediating RAF1-induced transcriptional repression of the TJ protein, occludin (OCLN) and subsequent oncogenic transformation of epithelial cells. Represses BRCA2 expression by binding to its E2-box-containing silencer and recruiting CTBP1 and HDAC1 in breast cells. In epidermal keratinocytes, binds to the E-box in ITGA3 promoter and represses its transcription. Involved in the regulation of ITGB1 and ITGB4 expression and cell adhesion and proliferation in epidermal keratinocytes. Binds to E-box2 domain of BSG and activates its expression during TGFB1-induced epithelial-mesenchymal transition (EMT) in hepatocytes. Represses E-Cadherin/CDH1 transcription via E-box elements. Involved in osteoblast maturation. Binds to RUNX2 and SOC9 promoters and may act as a positive and negative transcription regulator, respectively, in osteoblasts. Binds to CXCL12 promoter via E-box regions in mesenchymal stem cells and osteoblasts. Plays an essential role in TWIST1-induced EMT and its ability to promote invasion and metastasis. The chain is Zinc finger protein SNAI2 (Snai2) from Mus musculus (Mouse).